The primary structure comprises 555 residues: MEEMPERIEIKQKFPSWREMLKPVKEFEEGRLSYLSLPKQVDSEWFKMPFGDVERDFHDLKLPENWKEIFLEAMKDTLEKNRSFKLFMDICVRCGACADKCHYYIGTGDPKNMPVARAELIRSVYRRYFTPAGKFFGEWAGARELNEDVLKELYYYAYQCSLCRRCSLFCPYGIDTAEIVWWLRRMLSRVGLNQRFMTISIEASSRTGNHLGLLPGGMYGAIQQGLEELKDYTGFDLHTYINKKGADILFVAPSADYFATPHWYVMLGYLLLFNELEEKYGLTITWSTYASEGGNFGTFHSYEAAQLLNSKIYKEAERLGVSFIIGGECGHMWRDKHQFINTMNLPPKHEEWRRFWEDPDLGNLAEGLRGVRFDSYASGEHGWIHILEFVAALIEHKKIVVDKSRNDKWIATYHDPCNVARGMGLIEEPRYVLRNVMNNFYDMPEHTIKDKTYCCGAGGGMLADELMDLRMRGVMPRMMAVRHVYRKYGVNILLTPCAIDKAQFPHALEYWKIPIEVGGPMEMVGNALVMTAFGEKPEDRQFDLRGEPLKPEEGE.

4Fe-4S ferredoxin-type domains are found at residues 82 to 111 (RSFK…GDPK) and 151 to 180 (KELY…AEIV). [4Fe-4S] cluster contacts are provided by Cys-91, Cys-94, Cys-97, Cys-101, Cys-160, Cys-163, Cys-166, and Cys-170.

Consists of five subunits: an integral membrane subunit, a cytochrome b-like subunit, a cytochrome c subunit and two iron-sulfur subunits. [4Fe-4S] cluster serves as cofactor.

The protein resides in the cell membrane. Functionally, has menaquinol-oxidizing activity. HmeC and HmeD subunits may together mediate electron transfer from menaquinol to an unidentified electron acceptor on the cytoplasmic side of the membrane. The chain is Hdr-like menaquinol oxidoreductase iron-sulfur subunit 2 (hmeD) from Archaeoglobus fulgidus (strain ATCC 49558 / DSM 4304 / JCM 9628 / NBRC 100126 / VC-16).